A 416-amino-acid polypeptide reads, in one-letter code: Tyrosine--tRNA ligase (416 aa).

Residue Y40 participates in L-tyrosine binding. The short motif at 45 to 54 (ATAKSLHVGS) is the 'HIGH' region element. Positions 177 and 181 each coordinate L-tyrosine. Positions 237–241 (KMGKS) match the 'KMSKS' region motif. Residue K240 coordinates ATP. Residues 351–415 (ISIVQLIVKS…GKKRHAMVQL (65 aa)) enclose the S4 RNA-binding domain.

Belongs to the class-I aminoacyl-tRNA synthetase family. TyrS type 1 subfamily. As to quaternary structure, homodimer.

The protein localises to the cytoplasm. It carries out the reaction tRNA(Tyr) + L-tyrosine + ATP = L-tyrosyl-tRNA(Tyr) + AMP + diphosphate + H(+). In terms of biological role, catalyzes the attachment of tyrosine to tRNA(Tyr) in a two-step reaction: tyrosine is first activated by ATP to form Tyr-AMP and then transferred to the acceptor end of tRNA(Tyr). The polypeptide is Tyrosine--tRNA ligase (Roseobacter denitrificans (strain ATCC 33942 / OCh 114) (Erythrobacter sp. (strain OCh 114))).